A 383-amino-acid polypeptide reads, in one-letter code: Acetylornithine deacetylase (383 aa).

Zn(2+) is bound at residue histidine 80. The active site involves aspartate 82. Aspartate 112 contributes to the Zn(2+) binding site. Residue glutamate 144 is part of the active site. Residues glutamate 145, glutamate 169, and histidine 355 each coordinate Zn(2+).

Belongs to the peptidase M20A family. ArgE subfamily. Homodimer. It depends on Zn(2+) as a cofactor. Co(2+) serves as cofactor. Glutathione is required as a cofactor.

The protein localises to the cytoplasm. It carries out the reaction N(2)-acetyl-L-ornithine + H2O = L-ornithine + acetate. It functions in the pathway amino-acid biosynthesis; L-arginine biosynthesis; L-ornithine from N(2)-acetyl-L-ornithine (linear): step 1/1. In terms of biological role, catalyzes the hydrolysis of the amide bond of N(2)-acetylated L-amino acids. Cleaves the acetyl group from N-acetyl-L-ornithine to form L-ornithine, an intermediate in L-arginine biosynthesis pathway, and a branchpoint in the synthesis of polyamines. The polypeptide is Acetylornithine deacetylase (Salmonella paratyphi A (strain ATCC 9150 / SARB42)).